The sequence spans 478 residues: MTLSFVTRWRDELPETYTALSPTPLNNARLIWHNTELANTLSIPSSLFKNGAGVWGGEALLPGMSPLAQVYSGHQFGVWAGQLGDGRGILLGEQLLADGTTMDWHLKGAGLTPYSRMGDGRAVLRSTIRESLASEAMHYLGIPTTRALSIVTSDSPVYRETAEPGAMLMRVAPSHLRFGHFEHFYYRRESEKVRQLADFAIRHYWSHLEDDEDKYRLWFSDVVARTASLIAQWQTVGFAHGVMNTDNMSLLGLTLDYGPFGFLDDYEPGFICNHSDHQGRYSFDNQPAVALWNLQRLAQTLSPFVAVDALNEALDSYQQVLLTHYGERMRQKLGFMTEQKEDNALLNELFSLMARERSDYTRTFRMLSLTEQHSAASPLRDEFIDRAAFDDWFARYRGRLQQDEVSDSERQQLMQSVNPALVLRNWLAQRAIEAAEKGDMTELHRLHEALRNPFSDRDDDYVSRPPDWGKRLEVSCSS.

ATP contacts are provided by Gly-84, Gly-86, Arg-87, Lys-107, Asp-119, Gly-120, Arg-170, and Arg-177. Catalysis depends on Asp-246, which acts as the Proton acceptor. Residues Asn-247 and Asp-256 each coordinate Mg(2+). Asp-256 contacts ATP.

The protein belongs to the SELO family. The cofactor is Mg(2+). Requires Mn(2+) as cofactor.

It carries out the reaction L-seryl-[protein] + ATP = 3-O-(5'-adenylyl)-L-seryl-[protein] + diphosphate. The catalysed reaction is L-threonyl-[protein] + ATP = 3-O-(5'-adenylyl)-L-threonyl-[protein] + diphosphate. It catalyses the reaction L-tyrosyl-[protein] + ATP = O-(5'-adenylyl)-L-tyrosyl-[protein] + diphosphate. The enzyme catalyses L-histidyl-[protein] + UTP = N(tele)-(5'-uridylyl)-L-histidyl-[protein] + diphosphate. It carries out the reaction L-seryl-[protein] + UTP = O-(5'-uridylyl)-L-seryl-[protein] + diphosphate. The catalysed reaction is L-tyrosyl-[protein] + UTP = O-(5'-uridylyl)-L-tyrosyl-[protein] + diphosphate. Functionally, nucleotidyltransferase involved in the post-translational modification of proteins. It can catalyze the addition of adenosine monophosphate (AMP) or uridine monophosphate (UMP) to a protein, resulting in modifications known as AMPylation and UMPylation. In Escherichia coli O9:H4 (strain HS), this protein is Protein nucleotidyltransferase YdiU.